Here is a 783-residue protein sequence, read N- to C-terminus: MEPERKRSGSTLKKGRKRRLIPSKVVGAAEATRSHWDLEEKQQPIAKKARLSTVLFAENCEVTHGQLCELLKYAVLGKSSFPKPSWCQLFHQNHLKNVVVFILQGLSQLHFYKFYLEFGFLRKAFKHKFRMPPPSSDFLADIIGLQKKQIIGNLPKAMEGSLPFASSKVSINLQKDPIIQKYGFKKVGLTRCLLTKEEMKTYHFPLQGFLDCENFVPTKCNGSVTDNSPLFGLDCEMCLTSKGRELTRISLVAEGGGCVMDELVKPDNKIVDYLTSFSGITKKILNPVTTKLKDVQRRLKILLPPDAVLVGHSLDLDLRALKMIHPYVIDTSLLYVREQGRRFKLKFLAKAILGKDIQCPDRLGHDATEDARTTLELARYFLKYGPKKIAELNLEALFSYQESQEPRNTAEGVQRLNTSVLECLDSVGQKLLFLTQEADASALSSSKNCQTIKCLSNKEVLEQARVEIPLFPFSIVQFSFEPFSPNLTQEMNKRIKIKWTEMSTVYAGPFNKNCNLSALKRLFKSFGPVQLMTLVLETHQPHLCIQYEVLEAAQLAIESLDGVLVEGSCIKVQRPVTELTLDCDTLVNELEQDSENRGTIYLSGVSETFKEHLLQHCSIFLGLEAMILPKDLKSGKQKGYCFLRFKTFGSAQRALNILTGKDWKLRGRHALTPRHLHAWLRGLARESRLPGVRVIPPPSEQEAWQMLNVDHPKIAAWHWGRKIEKLYHNLCPGTLCLILLPGTKSTHGSLSGLGLMGIKDEEESTIPQTCVCESAHHLPGVIS.

The Exonuclease domain occupies L230–A378. RRM domains are found at residues S503–T577 and G598–H677.

In Bos taurus (Bovine), this protein is RNA exonuclease 5 (REXO5).